Reading from the N-terminus, the 364-residue chain is Histidinol-phosphate aminotransferase (364 aa).

The residue at position 222 (Lys222) is an N6-(pyridoxal phosphate)lysine.

The protein belongs to the class-II pyridoxal-phosphate-dependent aminotransferase family. Histidinol-phosphate aminotransferase subfamily. As to quaternary structure, homodimer. The cofactor is pyridoxal 5'-phosphate.

The enzyme catalyses L-histidinol phosphate + 2-oxoglutarate = 3-(imidazol-4-yl)-2-oxopropyl phosphate + L-glutamate. It functions in the pathway amino-acid biosynthesis; L-histidine biosynthesis; L-histidine from 5-phospho-alpha-D-ribose 1-diphosphate: step 7/9. The chain is Histidinol-phosphate aminotransferase from Brevibacillus brevis (strain 47 / JCM 6285 / NBRC 100599).